The chain runs to 397 residues: Tetratricopeptide repeat protein 4 homolog (397 aa).

3 TPR repeats span residues 90–125 (AETF…KCND), 130–163 (SIYL…NPLN), and 164–197 (MKAY…EPTN).

This sequence belongs to the TTC4 family.

The protein is Tetratricopeptide repeat protein 4 homolog (ttc4) of Dictyostelium discoideum (Social amoeba).